The following is a 206-amino-acid chain: Small ribosomal subunit protein uS4 (206 aa).

The S4 RNA-binding domain maps to 96–156; that stretch reads GRLDNVVYRM…EKAKKQSRVK (61 aa).

This sequence belongs to the universal ribosomal protein uS4 family. As to quaternary structure, part of the 30S ribosomal subunit. Contacts protein S5. The interaction surface between S4 and S5 is involved in control of translational fidelity.

Functionally, one of the primary rRNA binding proteins, it binds directly to 16S rRNA where it nucleates assembly of the body of the 30S subunit. Its function is as follows. With S5 and S12 plays an important role in translational accuracy. The polypeptide is Small ribosomal subunit protein uS4 (Enterobacter sp. (strain 638)).